The sequence spans 160 residues: Surface-adhesin protein E (160 aa).

Residues 1 to 15 (MKKIILTLSLGLLTA) form the signal peptide. The N-palmitoyl cysteine moiety is linked to residue C16. The S-diacylglycerol cysteine moiety is linked to residue C16.

It is found in the cell outer membrane. It localises to the cell surface. Acts as a multifunctional adhesin involved in direct interactions with host epithelial cells and host proteins. This is Surface-adhesin protein E (pe) from Haemophilus influenzae (strain ATCC 51907 / DSM 11121 / KW20 / Rd).